Here is a 512-residue protein sequence, read N- to C-terminus: MESVIFSINGEIIQVNKEIITASPYNFFKRIQDHHLKDEAIILNGINYHAFESLLDYMRWKKINITINNVEMILVAAIIIDVPPVVDLCVKTMIHNINSTNCIRMFNFSKRYGIKKLYNASMSEIINNITAVTSDPEFGKLSKDELTTILSHEDVNVNHEDVTAMILLKWIHKNPNDVDIINILHPKFMTNTMRNAISLLGLTISKSTKPVTRNGIKHNIVVIKNSDYISTITHYSPRTEYWTIVGNTDRQFYNANVLHNCLYIIGGMINNRHVYSVSRVDLKTKKWKTVTNMSSLKSEVSTCVNDGKLYVIGGLEFSISTGVAEYLKHGTSKWIRLPNLITPRYSGASVFVNDDIYVMGGVYTTYEKYVVLNDVECFTKNRWIKKSPMPRHHSIVYAVEYDGDIYAITGITHETRNYLYKYIVKEDKWIELYMYFNHVGKMFVCSCGDYILIIADAKYEYYPKSNTWNLFDMSTRNIEYYDMFTKDETPKCNVTHKSLPSFLSNCEKQFLQ.

The 66-residue stretch at 2-67 (ESVIFSINGE…MRWKKINITI (66 aa)) folds into the BTB domain. One can recognise a BACK domain in the interval 102-176 (CIRMFNFSKR…LLKWIHKNPN (75 aa)). 6 Kelch repeats span residues 216 to 261 (IKHN…LHNC), 262 to 307 (LYII…VNDG), 309 to 354 (LYVI…FVND), 356 to 403 (IYVM…EYDG), 405 to 449 (IYAI…SCGD), and 452 to 498 (LIIA…THKS).

The protein belongs to the poxviruses Kelch family.

This chain is Kelch repeat protein C2, found in Bos taurus (Bovine).